Here is a 304-residue protein sequence, read N- to C-terminus: MSGFVEKPEPVQVPGLTHLHTGKVRDLYRNEAGDLVMVASDRISAYDWVLPTEIPDKGRVLTRLSLWWFDQLADLVPNHVISTELPPGAPADWAGRTLICKSLRMVEVECVARGYLTGSGLVEYDATRTVCGIGLPEGLVNGSELPGPIFTPATKAAVGDHDENVSYEDIAREVGPETAAELRRTTLDVYRRARDIAHGRGIILADTKFEFGFETAEDGTERLIIADEVLTPDSSRFWPAATWEPGRAQPSYDKQFVRDWLTSPASGWDRASEQPPPALPPEIVAATRAKYIEAYEVLTGTNWA.

It belongs to the SAICAR synthetase family.

The enzyme catalyses 5-amino-1-(5-phospho-D-ribosyl)imidazole-4-carboxylate + L-aspartate + ATP = (2S)-2-[5-amino-1-(5-phospho-beta-D-ribosyl)imidazole-4-carboxamido]succinate + ADP + phosphate + 2 H(+). The protein operates within purine metabolism; IMP biosynthesis via de novo pathway; 5-amino-1-(5-phospho-D-ribosyl)imidazole-4-carboxamide from 5-amino-1-(5-phospho-D-ribosyl)imidazole-4-carboxylate: step 1/2. The protein is Phosphoribosylaminoimidazole-succinocarboxamide synthase of Streptomyces griseus subsp. griseus (strain JCM 4626 / CBS 651.72 / NBRC 13350 / KCC S-0626 / ISP 5235).